The primary structure comprises 296 residues: Probable ribosomal RNA small subunit methyltransferase A (296 aa).

The span at 1-16 (MTDATSGSDPDSTTPV) shows a compositional bias: polar residues. Positions 1 to 25 (MTDATSGSDPDSTTPVDLTGEDFRD) are disordered. S-adenosyl-L-methionine contacts are provided by His44, Leu46, Gly72, Glu93, Asp121, and Asn136.

This sequence belongs to the class I-like SAM-binding methyltransferase superfamily. rRNA adenine N(6)-methyltransferase family. RsmA subfamily.

Its subcellular location is the cytoplasm. Functionally, specifically dimethylates two adjacent adenosines in the loop of a conserved hairpin near the 3'-end of 16S rRNA in the 30S particle. May play a critical role in biogenesis of 30S subunits. This Haloquadratum walsbyi (strain DSM 16790 / HBSQ001) protein is Probable ribosomal RNA small subunit methyltransferase A.